A 1167-amino-acid polypeptide reads, in one-letter code: Tight junction protein 2 (1167 aa).

The PDZ 1 domain occupies 10–97 (TVTLQKDSKR…IAAIVVKRPR (88 aa)). Residues serine 107, serine 127, serine 130, serine 140, serine 145, serine 147, serine 173, serine 194, serine 205, and serine 239 each carry the phosphoserine modification. The segment at 129–195 (RSGYSERSRH…SRERSRGRSL (67 aa)) is disordered. A disordered region spans residues 225–286 (SYHEAYEPDY…KGQHDPDRPI (62 aa)). Positions 242-262 (YDRRAHPETRYERSRSREHLR) are enriched in basic and acidic residues. One can recognise a PDZ 2 domain in the interval 287-365 (GVLLTKSKAN…KLQLVVLRDS (79 aa)). Phosphoserine is present on residues serine 305, serine 378, serine 380, serine 386, serine 395, serine 404, serine 410, and serine 411. The segment at 381–485 (EVEDISEIES…LRPSPEDEAI (105 aa)) is disordered. The segment covering 395-426 (SPEERRQQYSDQDYHSSTEKLKERPSSREETS) has biased composition (basic and acidic residues). At threonine 435 the chain carries Phosphothreonine. A Phosphoserine modification is found at serine 479. Residues 489 to 570 (NTKMVRFKKG…GETVTILAQS (82 aa)) enclose the PDZ 3 domain. Residue tyrosine 554 is modified to Phosphotyrosine. Residues 584–649 (GDSFFIRSHF…PNKSRAEQMA (66 aa)) enclose the SH3 domain. The region spanning 660 to 858 (GDRADFWRMR…WFGSLKDSIQ (199 aa)) is the Guanylate kinase-like domain. 2 positions are modified to phosphoserine: serine 684 and serine 884. Residue threonine 887 is modified to Phosphothreonine. A phosphoserine mark is found at serine 895 and serine 902. 2 disordered regions span residues 904-1055 (FEDT…PRSV) and 1095-1167 (YAVP…DTEL). Residues threonine 907 and threonine 915 each carry the phosphothreonine modification. A compositionally biased stretch (basic and acidic residues) spans 938 to 949 (VQHEENIRKSSP). Phosphoserine occurs at positions 948, 960, 968, 988, and 1044. Over residues 976 to 990 (EPPKARSQNREDSFD) the composition is skewed to basic and acidic residues. Over residues 1037–1049 (ESEEVGESTEEQE) the composition is skewed to acidic residues. Residue tyrosine 1095 is modified to Phosphotyrosine. Residues serine 1124 and serine 1136 each carry the phosphoserine modification. Positions 1165 to 1167 (TEL) are interaction with SCRIB.

It belongs to the MAGUK family. In terms of assembly, homodimer. Interacts (via PDZ2 domain) with TJP1/ZO1 (via PDZ2 domain). Interacts with UBN1. Interacts with SCRIB. Interacts with OCLN. Interacts with SAFB in the nucleus. Interacts with USP53 (via the C-terminal region). Interacts with claudins, including CLDN1, CLDN2, CLDN3, CLDN5 and CLDN7. Interacts with CLDN18. Interacts (via N-terminus) with CTNNA1.

Its subcellular location is the cell junction. The protein resides in the adherens junction. The protein localises to the cell membrane. It localises to the nucleus. It is found in the tight junction. Plays a role in tight junctions and adherens junctions. Acts as a positive regulator of RANKL-induced osteoclast differentiation, potentially via mediating downstream transcriptional activity. This Mus musculus (Mouse) protein is Tight junction protein 2.